Reading from the N-terminus, the 976-residue chain is Ephrin type-B receptor 4b (976 aa).

The first 23 residues, 1 to 23 (MDRVCWIMALSWFWMVSTGLVSA), serve as a signal peptide directing secretion. Over 24–541 (EEEVLMNTKL…ESPSRLMLTG (518 aa)) the chain is Extracellular. The Eph LBD domain occupies 25 to 204 (EEVLMNTKLE…FFKKCPAVSR (180 aa)). Cystine bridges form between Cys-69/Cys-186 and Cys-103/Cys-113. 2 Fibronectin type-III domains span residues 326–434 (PPSA…TSRD) and 438–529 (PVSG…TLPD). The helical transmembrane segment at 542–562 (VLVAIGLLILIAVVIVAVFCF) threads the bilayer. The Cytoplasmic portion of the chain corresponds to 563–976 (RRSTRRRDPD…LRIHGGSLRY (414 aa)). The Protein kinase domain maps to 613–897 (VKIEEVIGAG…IPDGPSHPLL (285 aa)). ATP is bound by residues 619–627 (IGAGEFGEV) and Lys-645. Residue Asp-738 is the Proton acceptor of the active site. In terms of domain architecture, SAM spans 906–970 (SHCSSVADWL…LSSVQTLRIH (65 aa)).

It belongs to the protein kinase superfamily. Tyr protein kinase family. Ephrin receptor subfamily.

Its subcellular location is the cell membrane. The catalysed reaction is L-tyrosyl-[protein] + ATP = O-phospho-L-tyrosyl-[protein] + ADP + H(+). Functionally, receptor tyrosine kinase which binds promiscuously transmembrane ephrin-B family ligands residing on adjacent cells, leading to contact-dependent bidirectional signaling into neighboring cells. The signaling pathway downstream of the receptor is referred to as forward signaling while the signaling pathway downstream of the ephrin ligand is referred to as reverse signaling. Together with its cognate ligand/functional ligand EFNB2 is involved in the regulation of cell adhesion and cell migration, and plays a central role in heart morphogenesis, angiogenesis and blood vessel remodeling and permeability. EPHB4-mediated forward signaling controls cellular repulsion and segregation from EFNB2-expressing cells. Involved in somitogenesis. This chain is Ephrin type-B receptor 4b, found in Danio rerio (Zebrafish).